A 387-amino-acid polypeptide reads, in one-letter code: NADPH-dependent aldehyde reductase YqhD (387 aa).

Residues Gly38, Ser40, Asn68, Gly95, Ser96, Asp99, Thr138, Asn147, Gly149, Lys160, Tyr179, and Thr182 each contribute to the NADP(+) site. Residues Asp194, His198, His267, and His281 each contribute to the Zn(2+) site.

The protein belongs to the iron-containing alcohol dehydrogenase family. In terms of assembly, homodimer. The crystals contain two dimers in the asymmetric unit. It depends on Zn(2+) as a cofactor.

It carries out the reaction a primary alcohol + NADP(+) = an aldehyde + NADPH + H(+). The enzyme catalyses butan-1-ol + NADP(+) = butanal + NADPH + H(+). The catalysed reaction is 1-propanol + NADP(+) = propanal + NADPH + H(+). It catalyses the reaction allyl alcohol + NADP(+) = acrolein + NADPH + H(+). In terms of biological role, exhibits NADPH-dependent reductase activity for a broad range of short-chain aldehydes. Shows highest catalytic efficiency toward butanal, propanal and the highly toxic aldehydes acrolein and malondialdehyde (MDA), which are produced mainly during lipid peroxidation. Mediates resistance to reactive oxygen species (ROS) elicitors, such as paraquat and potassium tellurite, probably by protecting the cell against the toxic effects of reactive aldehydes derived from membrane lipid peroxidation. Also acts, with lower efficiency, on acetaldehyde, glyceraldehyde, glycolaldehyde, methylglyoxal, glyoxal and hydroxyacetone. Could be involved in glyoxal metabolism, by catalyzing the reduction of glyoxal to glycolaldehyde, and further to 1,2-ethandiol. Catalyzes the reduction of isobutyraldehyde (2-methylpropanal) to isobutanol, and probably contributes to the production of isobutanol. Can probably catalyze the reduction of glutaraldehyde, a widely used biocide, to 1,5-pentanediol, which is non-toxic. Overexpression of YqhD protects the cells against glutaraldehyde toxicity. Can catalyze in vitro the NADPH-dependent reduction of furfural, a natural product of lignocellulosic decomposition, to the less toxic product, furfuryl alcohol. However, it is unlikely that furfural is a physiological substrate. Functionally, in contrast, Sulzenbacher et al. detected significant activities only in the presence of alcohol and NADP(+). They reported in vitro NADP(+)-dependent alcohol dehydrogenase (ADH) activity towards various alcohols, with a preference for alcohols longer than C(3), but the affinity for the substrates is poor, suggesting that these compounds are not the physiological substrates. Perez et al. did not detect dehydrogenase activity with short and medium chain alcohols such as methanol, ethanol, propanol, butanol or isopropanol. The protein is NADPH-dependent aldehyde reductase YqhD (yqhD) of Escherichia coli (strain K12).